Here is a 393-residue protein sequence, read N- to C-terminus: Lipoyl synthase, mitochondrial (393 aa).

[4Fe-4S] cluster-binding residues include Cys111, Cys116, Cys122, Cys142, Cys146, Cys149, and Ser357. The Radical SAM core domain maps to 127–346; that stretch reads EHGTQTATIM…ETRGNELGFL (220 aa).

The protein belongs to the radical SAM superfamily. Lipoyl synthase family. It depends on [4Fe-4S] cluster as a cofactor.

Its subcellular location is the mitochondrion. The enzyme catalyses [[Fe-S] cluster scaffold protein carrying a second [4Fe-4S](2+) cluster] + N(6)-octanoyl-L-lysyl-[protein] + 2 oxidized [2Fe-2S]-[ferredoxin] + 2 S-adenosyl-L-methionine + 4 H(+) = [[Fe-S] cluster scaffold protein] + N(6)-[(R)-dihydrolipoyl]-L-lysyl-[protein] + 4 Fe(3+) + 2 hydrogen sulfide + 2 5'-deoxyadenosine + 2 L-methionine + 2 reduced [2Fe-2S]-[ferredoxin]. It functions in the pathway protein modification; protein lipoylation via endogenous pathway; protein N(6)-(lipoyl)lysine from octanoyl-[acyl-carrier-protein]: step 2/2. Functionally, catalyzes the radical-mediated insertion of two sulfur atoms into the C-6 and C-8 positions of the octanoyl moiety bound to the lipoyl domains of lipoate-dependent enzymes, thereby converting the octanoylated domains into lipoylated derivatives. The polypeptide is Lipoyl synthase, mitochondrial (Aedes aegypti (Yellowfever mosquito)).